A 770-amino-acid chain; its full sequence is uncharacterized protein (770 aa).

An N-terminal signal peptide occupies residues 1–24 (MVSAAWLRYPSLLTLGILVSRVAA). N-linked (GlcNAc...) asparagine glycosylation is found at asparagine 78, asparagine 204, asparagine 533, and asparagine 638. Positions 746-770 (SWGTGQNDVPPSLGAGIKRDGLRFT) are disordered.

The protein belongs to the glycosyl hydrolase 92 family.

It localises to the secreted. This is an uncharacterized protein from Arthroderma benhamiae (strain ATCC MYA-4681 / CBS 112371) (Trichophyton mentagrophytes).